The primary structure comprises 93 residues: Small ribosomal subunit protein uS19 (93 aa).

Residues 1-23 (MPRSLKKGPFVDDHLQKKVDAEN) are disordered. Basic and acidic residues predominate over residues 9–23 (PFVDDHLQKKVDAEN).

The protein belongs to the universal ribosomal protein uS19 family.

Its function is as follows. Protein S19 forms a complex with S13 that binds strongly to the 16S ribosomal RNA. The protein is Small ribosomal subunit protein uS19 of Nocardioides sp. (strain ATCC BAA-499 / JS614).